Here is a 56-residue protein sequence, read N- to C-terminus: MGHANIWYSHPRRYCQGSRSCRACSNRHGLIRKYGLNICRQCFREYAHDIGFKKLD.

4 residues coordinate Zn(2+): C21, C24, C39, and C42.

This sequence belongs to the universal ribosomal protein uS14 family. In terms of assembly, component of the 40S small ribosomal subunit. Requires Zn(2+) as cofactor.

The protein resides in the cytoplasm. The protein localises to the cytosol. Its subcellular location is the rough endoplasmic reticulum. The protein is Small ribosomal subunit protein uS14 (RpS29) of Lonomia obliqua (Moth).